Here is a 410-residue protein sequence, read N- to C-terminus: DNA replication and repair protein RecF (410 aa).

30 to 37 (GPNGHGKT) is a binding site for ATP.

Belongs to the RecF family.

It localises to the cytoplasm. In terms of biological role, the RecF protein is involved in DNA metabolism; it is required for DNA replication and normal SOS inducibility. RecF binds preferentially to single-stranded, linear DNA. It also seems to bind ATP. This is DNA replication and repair protein RecF from Rhodococcus jostii (strain RHA1).